We begin with the raw amino-acid sequence, 110 residues long: U1-lycotoxin-Ls1hh (110 aa).

Positions 1–20 are cleaved as a signal peptide; sequence MKFVLLFGVLLVTLFSYSSA. The propeptide occupies 21–44; sequence EMLDDFDQADEDELLSLIEKEEAR. Intrachain disulfides connect C47/C62, C54/C71, C61/C89, and C73/C87.

The protein belongs to the neurotoxin 19 (CSTX) family. 03 subfamily. In terms of tissue distribution, expressed by the venom gland.

The protein localises to the secreted. The polypeptide is U1-lycotoxin-Ls1hh (Lycosa singoriensis (Wolf spider)).